A 267-amino-acid chain; its full sequence is Membrane-spanning 4-domains subfamily A member 10 (267 aa).

The Cytoplasmic portion of the chain corresponds to 1-56 (MAGQAPTAVPGSVTGEVSRWQNLGPAQPAQKVAQPQNLVPDGHLEKALEGSDLLQK). The chain crosses the membrane as a helical span at residues 57–77 (LGGFHIAIAFAHLAFGGYLIS). Topologically, residues 78–83 (TVKNLH) are extracellular. A helical membrane pass occupies residues 84–104 (LVVLKCWYPLWGTVSFLVAGM). Topologically, residues 105-118 (AAMTTVTFPKTSLK) are cytoplasmic. A helical membrane pass occupies residues 119-139 (VLCVIANVISLFCALAGFFVI). The Extracellular segment spans residues 140–168 (AKDLFLEGPFPWPIWRPYPEPTTYIQRLE). Residues 169 to 189 (LTLFCFTFLEIFLSGSTAITA) traverse the membrane as a helical segment. The Cytoplasmic portion of the chain corresponds to 190–267 (YRMKRLQAED…LHTGPRTLRK (78 aa)).

Belongs to the MS4A family. Expressed in thymus, kidney, colon, brain and testis. Expressed also by various hematopoietic and lymphoblastoid cell lines.

Its subcellular location is the membrane. Its function is as follows. May be involved in signal transduction as a component of a multimeric receptor complex. This chain is Membrane-spanning 4-domains subfamily A member 10 (Ms4a10), found in Mus musculus (Mouse).